A 740-amino-acid chain; its full sequence is UvrABC system protein B (740 aa).

Residues 1-36 (MTIAIRTTLDEPENHSDFVPHRPSRPEKTEPSKPFR) form a disordered region. The segment covering 8–33 (TLDEPENHSDFVPHRPSRPEKTEPSK) has biased composition (basic and acidic residues). Residues 56 to 444 (KDIQKGERDQ…GGVFVEQIIR (389 aa)) form the Helicase ATP-binding domain. 69–76 (GVTGSGKT) lines the ATP pocket. Positions 122–145 (YYDYYQPEAYVPRTDTYIEKDSAI) match the Beta-hairpin motif. One can recognise a Helicase C-terminal domain in the interval 461-627 (QVDNLIFEAK…TVKRQVDDIV (167 aa)). Positions 651–686 (ARSISETEKEMLEAAANLEFEKAAQLRDVLHQLKRQ) constitute a UVR domain. The disordered stretch occupies residues 687-740 (ELGLPPEKSSEIQGRSEAGRPGTRKTRSDKAREAKASKRVKQEAGEKLLRSRGH). A compositionally biased stretch (basic and acidic residues) spans 712-740 (TRSDKAREAKASKRVKQEAGEKLLRSRGH).

This sequence belongs to the UvrB family. As to quaternary structure, forms a heterotetramer with UvrA during the search for lesions. Interacts with UvrC in an incision complex.

It is found in the cytoplasm. Its function is as follows. The UvrABC repair system catalyzes the recognition and processing of DNA lesions. A damage recognition complex composed of 2 UvrA and 2 UvrB subunits scans DNA for abnormalities. Upon binding of the UvrA(2)B(2) complex to a putative damaged site, the DNA wraps around one UvrB monomer. DNA wrap is dependent on ATP binding by UvrB and probably causes local melting of the DNA helix, facilitating insertion of UvrB beta-hairpin between the DNA strands. Then UvrB probes one DNA strand for the presence of a lesion. If a lesion is found the UvrA subunits dissociate and the UvrB-DNA preincision complex is formed. This complex is subsequently bound by UvrC and the second UvrB is released. If no lesion is found, the DNA wraps around the other UvrB subunit that will check the other stand for damage. This chain is UvrABC system protein B, found in Zymomonas mobilis subsp. mobilis (strain ATCC 31821 / ZM4 / CP4).